Here is a 561-residue protein sequence, read N- to C-terminus: Liver carboxylesterase B-1 (561 aa).

A signal peptide spans 1 to 18 (MCLRSLFLVSLATCVVCG). N-linked (GlcNAc...) asparagine glycosylation occurs at Asn79. A disulfide bridge connects residues Cys87 and Cys116. Residue Ser221 is the Acyl-ester intermediate of the active site. Cys273 and Cys284 form a disulfide bridge. Active-site charge relay system residues include Glu353 and His466. Residues 558–561 (HNEL) carry the Prevents secretion from ER motif.

Belongs to the type-B carboxylesterase/lipase family. As to quaternary structure, monomer.

Its subcellular location is the endoplasmic reticulum lumen. The catalysed reaction is a carboxylic ester + H2O = an alcohol + a carboxylate + H(+). Its function is as follows. Involved in the detoxification of xenobiotics and in the activation of ester and amide prodrugs. This Rattus norvegicus (Rat) protein is Liver carboxylesterase B-1.